Reading from the N-terminus, the 885-residue chain is Leucine--tRNA ligase (885 aa).

A 'HIGH' region motif is present at residues proline 48 to histidine 58. The 'KMSKS' region motif lies at threonine 639–serine 643. Lysine 642 is a binding site for ATP.

This sequence belongs to the class-I aminoacyl-tRNA synthetase family.

It localises to the cytoplasm. It carries out the reaction tRNA(Leu) + L-leucine + ATP = L-leucyl-tRNA(Leu) + AMP + diphosphate. The polypeptide is Leucine--tRNA ligase (Bordetella pertussis (strain Tohama I / ATCC BAA-589 / NCTC 13251)).